Here is a 335-residue protein sequence, read N- to C-terminus: Zinc finger protein 396 (335 aa).

The 83-residue stretch at 52–134 (RQQFRQFGYQ…TMLEDVEREL (83 aa)) folds into the SCAN box domain. 3 C2H2-type zinc fingers span residues 251-273 (QKCD…QRIH), 279-301 (YACD…RRTH), and 307-329 (YKCH…RKRH).

This sequence belongs to the krueppel C2H2-type zinc-finger protein family. In terms of assembly, isoforms 1 and 2 can both homo- and hetero-associate. As to expression, expressed strongly in liver, moderately in skeletal muscle and weakly in kidney, pancreas, spleen and prostate.

It localises to the nucleus. The protein localises to the cytoplasm. Functionally, isoform 1 and isoform 2 act as DNA-dependent transcriptional repressors. This chain is Zinc finger protein 396 (ZNF396), found in Homo sapiens (Human).